The chain runs to 622 residues: MENARRLLVLALGSVGVVYGDIGTSPLYAFREALRPVSHDGVTDVEIIGLISLMIWALTIIVTIKYVLFLLRADNQGEGGTLSLLALLMKTANGHTAILFFMGIAGAALFIGDAMITPALSVLSAVEGLKLVTPALSDYVVPIAVVILLLLFTVQSKGTAAVSNFFGPITLIWFVVMGTIGFVHIADDLSIFRAFNPYYAASFLFNEGYVGIVVLGAVFLTVTGAEALYADLGHFGRRPIQWAWFTVVFPALTLNYLGQGAFVLKNPEAMSDPFFLMFPKWALLPAVILATAATIIASQAVITGAFSLTRQAIHLGFLPRMAIFHTSETHTGQIYLPNVNTLLMFGVMALVFLFGSSEALATAYGISVTGAMVVTTVLSFEFLRMRWNWPTWWAAGALLPLFVLEFVFLGANMLKIHDGGYVPILIAATFIVIMWTWKRGTAILHAKTRHIDIPLASFIKSVERQSEHAPVSVTGTAIFLTSDPESTPAALLHNIKHNHVLHQQNFILTIRTANTPKVPKEERVSVRRLSERFTLLEMKFGFMETQNVSQALGLFRKSGLKFDIMSTSFYLGRRKLVPDAQSGMPHWQDRLFIALANAAIDPSDYFRLPTNRVVELGSHVII.

A run of 12 helical transmembrane segments spans residues 7–27, 50–70, 96–116, 132–152, 165–185, 210–230, 244–264, 282–302, 334–354, 360–380, 391–411, and 416–436; these read LLVL…TSPL, LISL…VLFL, TAIL…DAMI, VTPA…LLLF, FFGP…FVHI, VGIV…ALYA, WFTV…AFVL, ALLP…QAVI, IYLP…VFLF, LATA…VLSF, TWWA…FLGA, and IHDG…IMWT.

This sequence belongs to the HAK/KUP transporter (TC 2.A.72) family.

Its subcellular location is the cell inner membrane. It catalyses the reaction K(+)(in) + H(+)(in) = K(+)(out) + H(+)(out). Its function is as follows. Transport of potassium into the cell. Likely operates as a K(+):H(+) symporter. This is Probable potassium transport system protein Kup 1 from Rhizobium meliloti (strain 1021) (Ensifer meliloti).